Here is a 135-residue protein sequence, read N- to C-terminus: UPF0299 membrane protein YE2790 (135 aa).

The next 4 membrane-spanning stretches (helical) occupy residues 4-24 (VTSL…CLWA), 30-50 (LLLP…FALL), 63-83 (GCHL…VGVM), and 93-113 (FGPI…VVGY).

It belongs to the UPF0299 family.

Its subcellular location is the cell inner membrane. The chain is UPF0299 membrane protein YE2790 from Yersinia enterocolitica serotype O:8 / biotype 1B (strain NCTC 13174 / 8081).